Consider the following 492-residue polypeptide: Cysteine--tRNA ligase (492 aa).

Cysteine 35 provides a ligand contact to Zn(2+). The 'HIGH' region signature appears at 37 to 47 (PTVYSNVHLGN). Cysteine 230, histidine 255, and glutamate 259 together coordinate Zn(2+). The 'KMSKS' region motif lies at 287 to 291 (KMAKS). Lysine 290 lines the ATP pocket.

Belongs to the class-I aminoacyl-tRNA synthetase family. As to quaternary structure, monomer. Zn(2+) serves as cofactor.

It is found in the cytoplasm. It carries out the reaction tRNA(Cys) + L-cysteine + ATP = L-cysteinyl-tRNA(Cys) + AMP + diphosphate. The polypeptide is Cysteine--tRNA ligase (Flavobacterium johnsoniae (strain ATCC 17061 / DSM 2064 / JCM 8514 / BCRC 14874 / CCUG 350202 / NBRC 14942 / NCIMB 11054 / UW101) (Cytophaga johnsonae)).